A 421-amino-acid chain; its full sequence is Flap endonuclease 1 (421 aa).

The N-domain stretch occupies residues 1–109 (MGIKGLAKLL…HELIKRREKR (109 aa)). Position 34 (D34) interacts with Mg(2+). DNA contacts are provided by R47 and R75. Mg(2+) is bound by residues D91, E163, E165, D184, and D186. Residues 127–258 (EQDKQSKRLV…KTALKLIREH (132 aa)) form an I-domain region. E163 is a binding site for DNA. Positions 236 and 238 each coordinate DNA. Residue D238 coordinates Mg(2+). A disordered region spans residues 284 to 307 (KKLDAQSDDDDEEGVESPSKEENN). The segment covering 289 to 298 (QSDDDDEEGV) has biased composition (acidic residues). The interaction with PCNA stretch occupies residues 379–387 (PQTRMDSFF). The interval 398 to 421 (SAAKRKADAAKAKAAVSKKKTKKH) is disordered.

It belongs to the XPG/RAD2 endonuclease family. FEN1 subfamily. As to quaternary structure, interacts with PCNA. Three molecules of FEN1 bind to one PCNA trimer with each molecule binding to one PCNA monomer. PCNA stimulates the nuclease activity without altering cleavage specificity. The cofactor is Mg(2+). Post-translationally, phosphorylated. Phosphorylation upon DNA damage induces relocalization to the nuclear plasma.

The protein localises to the nucleus. It is found in the nucleolus. It localises to the nucleoplasm. The protein resides in the mitochondrion. In terms of biological role, structure-specific nuclease with 5'-flap endonuclease and 5'-3' exonuclease activities involved in DNA replication and repair. During DNA replication, cleaves the 5'-overhanging flap structure that is generated by displacement synthesis when DNA polymerase encounters the 5'-end of a downstream Okazaki fragment. It enters the flap from the 5'-end and then tracks to cleave the flap base, leaving a nick for ligation. Also involved in the long patch base excision repair (LP-BER) pathway, by cleaving within the apurinic/apyrimidinic (AP) site-terminated flap. Acts as a genome stabilization factor that prevents flaps from equilibrating into structures that lead to duplications and deletions. Also possesses 5'-3' exonuclease activity on nicked or gapped double-stranded DNA, and exhibits RNase H activity. Also involved in replication and repair of rDNA and in repairing mitochondrial DNA. This Phaeodactylum tricornutum (strain CCAP 1055/1) protein is Flap endonuclease 1.